The following is a 65-amino-acid chain: Large ribosomal subunit protein uL30 (65 aa).

Belongs to the universal ribosomal protein uL30 family. As to quaternary structure, part of the 50S ribosomal subunit.

In Mesorhizobium japonicum (strain LMG 29417 / CECT 9101 / MAFF 303099) (Mesorhizobium loti (strain MAFF 303099)), this protein is Large ribosomal subunit protein uL30.